Here is a 181-residue protein sequence, read N- to C-terminus: uncharacterized protein (181 aa).

This is an uncharacterized protein from Rickettsia prowazekii (strain Madrid E).